The sequence spans 78 residues: Small ribosomal subunit protein bS20 (78 aa).

The protein belongs to the bacterial ribosomal protein bS20 family.

Functionally, binds directly to 16S ribosomal RNA. This chain is Small ribosomal subunit protein bS20, found in Streptococcus sanguinis (strain SK36).